The sequence spans 599 residues: Elongation factor 4 (599 aa).

The tr-type G domain maps to 5–187; it reads NHIRNFSIIA…QIVQLVPPPE (183 aa). GTP is bound by residues 17–22 and 134–137; these read DHGKST and NKMD.

It belongs to the TRAFAC class translation factor GTPase superfamily. Classic translation factor GTPase family. LepA subfamily.

The protein resides in the cell inner membrane. It carries out the reaction GTP + H2O = GDP + phosphate + H(+). Required for accurate and efficient protein synthesis under certain stress conditions. May act as a fidelity factor of the translation reaction, by catalyzing a one-codon backward translocation of tRNAs on improperly translocated ribosomes. Back-translocation proceeds from a post-translocation (POST) complex to a pre-translocation (PRE) complex, thus giving elongation factor G a second chance to translocate the tRNAs correctly. Binds to ribosomes in a GTP-dependent manner. The protein is Elongation factor 4 of Hahella chejuensis (strain KCTC 2396).